A 446-amino-acid polypeptide reads, in one-letter code: ATP synthase subunit b-delta (446 aa).

Residues 1 to 168 (MSTFIGQLVG…PKGADVEYPL (168 aa)) form an ATP synthase subunit b region. The helical transmembrane segment at 4 to 24 (FIGQLVGFAAIVYLVWWYVVP) threads the bilayer. Positions 169–446 (LAKMRSASRR…LVAAEAALPD (278 aa)) are ATP synthase subunit delta.

This sequence in the N-terminal section; belongs to the ATPase B chain family. It in the C-terminal section; belongs to the ATPase delta chain family. As to quaternary structure, F-type ATPases have 2 components, F(1) - the catalytic core - and F(0) - the membrane proton channel. F(1) has five subunits: alpha(3), beta(3), gamma(1), delta(1), epsilon(1). F(0) has three main subunits: a(1), b(2) and c(10-14). The alpha and beta chains form an alternating ring which encloses part of the gamma chain. F(1) is attached to F(0) by a central stalk formed by the gamma and epsilon chains, while a peripheral stalk is formed by the delta and b chains.

The protein resides in the cell membrane. Its function is as follows. F(1)F(0) ATP synthase produces ATP from ADP in the presence of a proton or sodium gradient. F-type ATPases consist of two structural domains, F(1) containing the extramembraneous catalytic core and F(0) containing the membrane proton channel, linked together by a central stalk and a peripheral stalk. During catalysis, ATP synthesis in the catalytic domain of F(1) is coupled via a rotary mechanism of the central stalk subunits to proton translocation. In terms of biological role, this fusion protein includes a component of the F(0) channel (subunit b) and of the F(1) subunit (subunit delta). Two copies of subunit b and one of delta together form the peripheral 'stator' stalk which links F(1) to F(0). The sequence is that of ATP synthase subunit b-delta (atpFH) from Mycobacterium leprae (strain Br4923).